The sequence spans 396 residues: Elongation factor Tu (396 aa).

In terms of domain architecture, tr-type G spans 10–206 (KPHVNVGTIG…AMDEYIPTPE (197 aa)). The tract at residues 19–26 (GHVDHGKT) is G1. A GTP-binding site is contributed by 19–26 (GHVDHGKT). Thr26 is a binding site for Mg(2+). Residues 60–64 (GITIA) form a G2 region. The tract at residues 81-84 (DCPG) is G3. GTP-binding positions include 81 to 85 (DCPGH) and 136 to 139 (NKAD). Residues 136–139 (NKAD) form a G4 region. The G5 stretch occupies residues 174–176 (SAL).

Belongs to the TRAFAC class translation factor GTPase superfamily. Classic translation factor GTPase family. EF-Tu/EF-1A subfamily. In terms of assembly, monomer.

It localises to the cytoplasm. It catalyses the reaction GTP + H2O = GDP + phosphate + H(+). Functionally, GTP hydrolase that promotes the GTP-dependent binding of aminoacyl-tRNA to the A-site of ribosomes during protein biosynthesis. This is Elongation factor Tu from Alkalilimnicola ehrlichii (strain ATCC BAA-1101 / DSM 17681 / MLHE-1).